The following is a 194-amino-acid chain: Probable RNA polymerase sigma factor HI_1459 (194 aa).

A Polymerase core binding motif is present at residues 45–58; it reads DLVQEAFLSAFKNL. Positions 161–180 form a DNA-binding region, H-T-H motif; the sequence is SEEICQETHLTSSNLHTTLY.

It belongs to the sigma-70 factor family. ECF subfamily.

This Haemophilus influenzae (strain ATCC 51907 / DSM 11121 / KW20 / Rd) protein is Probable RNA polymerase sigma factor HI_1459.